The sequence spans 356 residues: Geranylgeranyl pyrophosphate synthase penG (356 aa).

Isopentenyl diphosphate-binding residues include lysine 83, arginine 86, and histidine 115. Residues aspartate 122 and aspartate 126 each contribute to the Mg(2+) site. Arginine 131 lines the dimethylallyl diphosphate pocket. Arginine 132 is a binding site for isopentenyl diphosphate. Dimethylallyl diphosphate-binding residues include lysine 209, threonine 210, and glutamine 243. Aspartate 246 contributes to the Mg(2+) binding site. Dimethylallyl diphosphate is bound by residues asparagine 250, lysine 260, and lysine 270.

Belongs to the FPP/GGPP synthase family. Requires Mg(2+) as cofactor.

It catalyses the reaction isopentenyl diphosphate + dimethylallyl diphosphate = (2E)-geranyl diphosphate + diphosphate. The catalysed reaction is isopentenyl diphosphate + (2E)-geranyl diphosphate = (2E,6E)-farnesyl diphosphate + diphosphate. The enzyme catalyses isopentenyl diphosphate + (2E,6E)-farnesyl diphosphate = (2E,6E,10E)-geranylgeranyl diphosphate + diphosphate. It participates in secondary metabolite biosynthesis. Geranylgeranyl pyrophosphate synthase; part of the gene cluster that mediates the biosynthesis of the indole diterpenes penitrems. The geranylgeranyl diphosphate (GGPP) synthase ptmG catalyzes the first step in penitrem biosynthesis via conversion of farnesyl pyrophosphate and isopentyl pyrophosphate into geranylgeranyl pyrophosphate (GGPP). Condensation of indole-3-glycerol phosphate with GGPP by the prenyl transferase ptmC then forms 3-geranylgeranylindole (3-GGI). Epoxidation by the FAD-dependent monooxygenase ptmM leads to a epoxidized-GGI that is substrate of the terpene cyclase ptmB for cyclization to yield paspaline. Paspaline is subsequently converted to 13-desoxypaxilline by the cytochrome P450 monooxygenase ptmP, the latter being then converted to paxilline by the cytochrome P450 monooxygenase ptmQ. Paxilline is converted to beta-paxitriol via C-10 ketoreduction by the short-chain dehydrogenase ptmH which can be monoprenylated at the C-20 by the indole diterpene prenyltransferase ptmD. A two-step elimination (acetylation and elimination) process performed by the O-acetyltransferase ptmV and ptmI leads to the production of the prenylated form of penijanthine. The FAD-linked oxidoreductase ptmO then converts the prenylated form of penijanthine into PC-M5 which is in turn transformed into PC-M4 by the aromatic dimethylallyltransferase ptmE. Five sequential oxidative transformations performed by the cytochrome P450 monooxygenases ptmK, ptmU, ptmL, ptmN and ptmJ yield the various penitrem compounds. PtmK, ptmU and ptmM are involved in the formation of the key bicyclic ring of penitrem C via the formation of the intermediates secopenitrem D and penitrem D. PtmL catalyzes the epoxidation of penitrem D and C to yield penitrem B and F, respectively. PtmJ catalyzes the last benzylic hydroxylation to convert penitrem B to prenitrem E and penitrem F to penitrem A. This is Geranylgeranyl pyrophosphate synthase penG from Penicillium ochrochloron.